Reading from the N-terminus, the 211-residue chain is Thymidylate kinase (211 aa).

10–17 (GPDGAGKT) provides a ligand contact to ATP.

This sequence belongs to the thymidylate kinase family.

The catalysed reaction is dTMP + ATP = dTDP + ADP. Its function is as follows. Phosphorylation of dTMP to form dTDP in both de novo and salvage pathways of dTTP synthesis. This chain is Thymidylate kinase, found in Lactococcus lactis subsp. cremoris (strain MG1363).